The following is a 394-amino-acid chain: Glycerol-1-phosphate dehydrogenase [NAD(P)+] (394 aa).

NAD(+) is bound by residues Asp54, 116-120, and 138-141; these read GTIHD and TAPS. Position 143 (Asp143) interacts with substrate. Ser147 lines the NAD(+) pocket. Residue Asp190 coordinates substrate. Residues Asp190 and His270 each coordinate Ni(2+). Residue His274 coordinates substrate. His290 contributes to the Ni(2+) binding site.

The protein belongs to the glycerol-1-phosphate dehydrogenase family. Homodimer. The cofactor is Ni(2+).

It localises to the cytoplasm. The enzyme catalyses sn-glycerol 1-phosphate + NAD(+) = dihydroxyacetone phosphate + NADH + H(+). The catalysed reaction is sn-glycerol 1-phosphate + NADP(+) = dihydroxyacetone phosphate + NADPH + H(+). Its function is as follows. Catalyzes the NAD(P)H-dependent reduction of dihydroxyacetonephosphate (DHAP or glycerone phosphate) to glycerol 1-phosphate (G1P). The G1P thus generated is probably used for the synthesis of phosphoglycerolipids in Gram-positive bacterial species. This chain is Glycerol-1-phosphate dehydrogenase [NAD(P)+], found in Bacillus velezensis (strain DSM 23117 / BGSC 10A6 / LMG 26770 / FZB42) (Bacillus amyloliquefaciens subsp. plantarum).